A 322-amino-acid chain; its full sequence is Malate dehydrogenase (322 aa).

NAD(+)-binding positions include 10 to 15 and Asp-34; that span reads GSGQIG. Arg-83 and Arg-89 together coordinate substrate. Residues Asn-96 and 119 to 121 each bind NAD(+); that span reads ITN. Substrate-binding residues include Asn-121 and Arg-152. The active-site Proton acceptor is the His-176.

Belongs to the LDH/MDH superfamily. MDH type 3 family.

It carries out the reaction (S)-malate + NAD(+) = oxaloacetate + NADH + H(+). Functionally, catalyzes the reversible oxidation of malate to oxaloacetate. The polypeptide is Malate dehydrogenase (Nitrobacter winogradskyi (strain ATCC 25391 / DSM 10237 / CIP 104748 / NCIMB 11846 / Nb-255)).